Consider the following 301-residue polypeptide: Methionyl-tRNA formyltransferase (301 aa).

(6S)-5,6,7,8-tetrahydrofolate is bound at residue 109–112 (SLLP).

This sequence belongs to the Fmt family.

The catalysed reaction is L-methionyl-tRNA(fMet) + (6R)-10-formyltetrahydrofolate = N-formyl-L-methionyl-tRNA(fMet) + (6S)-5,6,7,8-tetrahydrofolate + H(+). Functionally, attaches a formyl group to the free amino group of methionyl-tRNA(fMet). The formyl group appears to play a dual role in the initiator identity of N-formylmethionyl-tRNA by promoting its recognition by IF2 and preventing the misappropriation of this tRNA by the elongation apparatus. The sequence is that of Methionyl-tRNA formyltransferase from Jannaschia sp. (strain CCS1).